Reading from the N-terminus, the 420-residue chain is Probable aminotransferase aclI (420 aa).

Residue Lys-264 is modified to N6-(pyridoxal phosphate)lysine.

The protein belongs to the class-I pyridoxal-phosphate-dependent aminotransferase family. Pyridoxal 5'-phosphate serves as cofactor.

Its pathway is mycotoxin biosynthesis. Probable aminotransferase; part of the gene cluster that mediates the biosynthesis of aspirochlorine (or antibiotic A30641), an unusual halogenated spiro compound with distinctive antifungal properties due to selective inhibition of protein biosynthesis, and which is also active against bacteria, viruses, and murine tumor cells. The non-ribosomal peptide synthetase (NRPS) aclP is responsible the formation of the diketopiperazine (DKP) core from the condensation of 2 phenylalanine residues. One Phe residue is tailored into chlorotyrosine by hydroxylation and chlorination, whereas the second Phe undergoes an unprecedented C-C bond cleavage to be converted into glycine. After formation of the DKP, sulfur is incorporated into the DKP by conjugation with glutathione by aclG, followed by its stepwise degradation to the thiol by aclI, aclJ and aclK, and the dithiol oxidation by aclT. In addition, oxygenases (aclB, aclC, aclL and aclO) and O-methyltransferases (aclM and aclU) act as tailoring enzymes to produce the intermediate dechloroaspirochlorine. Ultimately, chlorination of dechloroaspirochlorine by the halogenase aclH is the last step in the aspirochlorine pathway. This is Probable aminotransferase aclI from Aspergillus oryzae (strain ATCC 42149 / RIB 40) (Yellow koji mold).